Here is a 424-residue protein sequence, read N- to C-terminus: MTRSLAVQGGSPVRTRPWPLWPQPAPGAVRALDGVLTSGRWSISGPYRGAASQERRFAQAFAAYNGVEHCVPAASGTASLMLAMEACGIGAGDEVIVPGLSWVASGSTVLGVNAVPVFCDVDPDTLCLDPAAVESALTERTKAIVVVHLYSAVAAMDALRALADRHGLPLLEDCAQAHGAEYRGVKVGALATAGTFSMQHSKVLTSGEGGAVITRDAEFARRVEHLRADGRCLAGQPVGDGQMELVETGELMGSNRCVSEFQAALLVEQLGVLDEQNERRRRNAALLDKLLADEGYRPQTTSEGTSTRTYYTYAARLPEGELTHVDAAAVGEALTAELGFPVAPCYAPITRNRLYDPRSRGRFALGVQHESRIDPKRFELPVCEEAARRTVTVHHAALLGDESDMHDIATAFGKVVRHGALLTG.

Lys202 carries the N6-(pyridoxal phosphate)lysine modification.

It belongs to the DegT/DnrJ/EryC1 family. L-glutamine:2-deoxy-scyllo-inosose/scyllo-inosose aminotransferase subfamily. Requires pyridoxal 5'-phosphate as cofactor.

The catalysed reaction is 2-deoxy-L-scyllo-inosose + L-glutamine = 2-deoxy-scyllo-inosamine + 2-oxoglutaramate. The enzyme catalyses 3-amino-2,3-dideoxy-scyllo-inosose + L-glutamine = 2-deoxystreptamine + 2-oxoglutaramate. It functions in the pathway metabolic intermediate biosynthesis; 2-deoxystreptamine biosynthesis; 2-deoxystreptamine from D-glucose 6-phosphate: step 2/4. The protein operates within metabolic intermediate biosynthesis; 2-deoxystreptamine biosynthesis; 2-deoxystreptamine from D-glucose 6-phosphate: step 4/4. It participates in antibiotic biosynthesis; paromomycin biosynthesis. Its function is as follows. Catalyzes the PLP-dependent transamination of 2-deoxy-scyllo-inosose (2-DOI) to form 2-deoxy-scyllo-inosamine (2-DOIA) using L-glutamine as the amino donor. Also catalyzes the transamination of 3-amino-2,3-dideoxy-scyllo-inosose (keto-2-DOIA) into 2-deoxystreptamine (2-DOS). The sequence is that of L-glutamine:2-deoxy-scyllo-inosose aminotransferase (parS) from Streptomyces paromomycinus (Streptomyces rimosus subsp. paromomycinus).